A 757-amino-acid chain; its full sequence is Cellulose synthase-like protein B5 (757 aa).

The next 2 helical transmembrane spans lie at 24 to 44 (AVDLTILGLLYSLLLYRILHI) and 50 to 70 (VWLLAFFCESCFSLVWLIFTC). Catalysis depends on residues Asp-136 and Asp-460. A run of 6 helical transmembrane segments spans residues 531–551 (LAYFWALMCLRSIPELIYCLL), 572–592 (IVTLVGMHCLYSLWQFMSLGF), 613–633 (LFSIQDIILKLLGISQIGFVI), 671–691 (LFIPGTFIMLVNLAALAGYLV), 704–724 (GSGLAEACGCILVVMLFLPFL), and 735–755 (IPLSTLSKAAFLTVLFVFFCV).

It belongs to the glycosyltransferase 2 family. Plant cellulose synthase-like B subfamily. Expressed in young seedlings, primarily in the vascular tissue. Expressed in the root cap.

It is found in the golgi apparatus membrane. Its function is as follows. Thought to be a Golgi-localized beta-glycan synthase that polymerize the backbones of noncellulosic polysaccharides (hemicelluloses) of plant cell wall. This chain is Cellulose synthase-like protein B5 (CSLB5), found in Arabidopsis thaliana (Mouse-ear cress).